We begin with the raw amino-acid sequence, 172 residues long: Peptidyl-tRNA hydrolase (172 aa).

Y10 contacts tRNA. The Proton acceptor role is filled by H15. F59, N61, and N101 together coordinate tRNA.

This sequence belongs to the PTH family. Monomer.

It is found in the cytoplasm. The catalysed reaction is an N-acyl-L-alpha-aminoacyl-tRNA + H2O = an N-acyl-L-amino acid + a tRNA + H(+). In terms of biological role, hydrolyzes ribosome-free peptidyl-tRNAs (with 1 or more amino acids incorporated), which drop off the ribosome during protein synthesis, or as a result of ribosome stalling. Its function is as follows. Catalyzes the release of premature peptidyl moieties from peptidyl-tRNA molecules trapped in stalled 50S ribosomal subunits, and thus maintains levels of free tRNAs and 50S ribosomes. The sequence is that of Peptidyl-tRNA hydrolase from Rubrobacter xylanophilus (strain DSM 9941 / JCM 11954 / NBRC 16129 / PRD-1).